A 617-amino-acid polypeptide reads, in one-letter code: V-type proton ATPase catalytic subunit A (617 aa).

250–257 (GAFGCGKT) lines the ATP pocket. Phosphoserine; by AMPK is present on Ser384.

Belongs to the ATPase alpha/beta chains family. In terms of assembly, V-ATPase is a heteromultimeric enzyme made up of two complexes: the ATP-hydrolytic V1 complex and the proton translocation V0 complex. The V1 complex consists of three catalytic AB heterodimers that form a heterohexamer, three peripheral stalks each consisting of EG heterodimers, one central rotor including subunits D and F, and the regulatory subunits C and H. The proton translocation complex V0 consists of the proton transport subunit a, a ring of proteolipid subunits c9c'', rotary subunit d, subunits e and f, and the accessory subunits ATP6AP1/Ac45 and ATP6AP2/PRR. Interacts with the V0 complex V-ATPase subunit a4 ATP6V0A4. Interacts with WFS1. Interacts with alpha-crystallin B chain/CRYAB and with MTOR, forming a ternary complex. Phosphorylation at Ser-384 by AMPK down-regulates its enzyme activity.

Its subcellular location is the cytoplasm. It localises to the cytosol. The protein localises to the cytoplasmic vesicle. The protein resides in the secretory vesicle. It is found in the clathrin-coated vesicle membrane. Its subcellular location is the lysosome. It catalyses the reaction ATP + H2O + 4 H(+)(in) = ADP + phosphate + 5 H(+)(out). ATP hydrolysis occurs at the interface between the nucleotide-binding domains of subunits A and B. ATP hydrolysis triggers a conformational change in the subunits D and F, which induces a shift of subunit d. The c-ring is subsequently rotated and results in a continuous proton translocation across the membrane. Functionally, catalytic subunit of the V1 complex of vacuolar(H+)-ATPase (V-ATPase), a multisubunit enzyme composed of a peripheral complex (V1) that hydrolyzes ATP and a membrane integral complex (V0) that translocates protons. V-ATPase is responsible for acidifying and maintaining the pH of intracellular compartments and in some cell types, is targeted to the plasma membrane, where it is responsible for acidifying the extracellular environment. In aerobic conditions, involved in intracellular iron homeostasis, thus triggering the activity of Fe(2+) prolyl hydroxylase (PHD) enzymes, and leading to HIF1A hydroxylation and subsequent proteasomal degradation. May play a role in neurite development and synaptic connectivity. In Mus musculus (Mouse), this protein is V-type proton ATPase catalytic subunit A (Atp6v1a).